The sequence spans 5206 residues: Multifunctional-autoprocessing repeats-in-toxin (5206 aa).

The first 19 residues, 1–19 (MGKPFWRSVEYFFTGNYSA), serve as a signal peptide directing secretion. RtxA repeat units follow at residues 101-118 (GAAG…GDVS), 121-138 (GAAA…GNVT), 141-157 (GAGG…QGNL), 161-184 (GAGA…GDVT), 187-204 (GAGA…GNIT), 207-224 (GAGA…GDIT), 255-272 (GVGG…GDIH), 275-291 (GGGA…GSSF), 584-601 (GAGG…GNVY), 604-620 (GGGI…FGNT), 624-641 (GGGA…GDLT), 644-658 (GAGL…SKQG), 741-753 (AGGA…VGDG), 759-771 (MLGG…HISG), 782-798 (ALGG…GNTL), 801-816 (MGGG…DGTT), 820-835 (MVGG…NGDT), 841-855 (GVGN…GQTL), 858-875 (MGAA…TSIA), 877-891 (MIGA…GEGN), 896-910 (MGGL…GNGD), 915-932 (MVAE…MSVA), 934-950 (MLAK…GTTL), 972-984 (MIGQ…KVGN), 991-1006 (MVGK…DGTS), 1031-1043 (GKAN…GDGL), 1067-1079 (AAAK…HVGD), 1087-1102 (AGKG…GTTV), 1110-1122 (GNVM…GTTI), 1125-1142 (AKGK…LGVN), 1145-1159 (WGQA…DGDR), 1163-1179 (AKGE…GKEV), 1184-1199 (GKAN…DDYT), 1201-1217 (AWGK…GRNV), 1220-1236 (AKGE…GDSF), 1242-1256 (KGNI…MQVT), 1258-1275 (AKGK…LSVT), 1296-1313 (AWGK…LNVA), and 1315-1332 (MKGK…LNIN). Positions 1606-1626 (SQQANAVSEHATQNQASQNAL) are enriched in polar residues. Disordered stretches follow at residues 1606–1682 (SQQA…ESEA) and 1738–1895 (IAAA…EQEA). Over residues 1627–1646 (SDKERAEADRQRLEQEKQKQ) the composition is skewed to basic and acidic residues. The span at 1652–1671 (GSQSQLESTDQQALGNNGQA) shows a compositional bias: polar residues. The segment covering 1778 to 1805 (AEAKADAETRKADAVAKSNDAKQAESDA) has biased composition (basic and acidic residues). Positions 1825–1834 (NKANQAQNDA) are enriched in polar residues. The segment covering 1835–1849 (KGTKQNEGDRPDREG) has biased composition (basic and acidic residues). The segment covering 1870–1880 (SHITTDSQTNA) has biased composition (polar residues). Residues 2377-2461 (ELMSVTELLD…SLLNQVNSRL (85 aa)) are membrane localization region (MLD). The tract at residues 2537–2901 (EYGQVVADTI…HQVTDVLDAL (365 aa)) is rho inactivation domain (RID). The segment at 2998–3113 (VVLFLHGSGS…MPSMTKAITA (116 aa)) is ABH effector region. The 185-residue stretch at 4111–4295 (PTADGGESRF…AENNKVSLSW (185 aa)) folds into the Peptidase C80 domain. 1D-myo-inositol hexakisphosphate is bound by residues 4117–4119 (ESR), 4144–4145 (KH), and arginine 4175. The active-site For cysteine protease activity is histidine 4181. Serine 4226 provides a ligand contact to 1D-myo-inositol hexakisphosphate. The Nucleophile; for cysteine protease activity role is filled by cysteine 4230. Residues 4259–4261 (SVR), 4272–4273 (RK), lysine 4285, and lysine 4290 contribute to the 1D-myo-inositol hexakisphosphate site. Disordered stretches follow at residues 4333–4362 (GAIG…ANNK) and 4738–4779 (LKEK…ETPD). The span at 4750–4762 (SSVSVNGASVNSA) shows a compositional bias: low complexity.

Mg(2+) serves as cofactor.

Its subcellular location is the secreted. It localises to the host cytoplasm. It is found in the host cytosol. The protein localises to the host cell membrane. It catalyses the reaction L-lysyl-/S-(2E,6E,10E)-geranylgeranyl-L-cysteinyl-[protein] + hexadecanoyl-CoA = N(6)-hexadecanoyl-L-lysyl-/S-(2E,6E,10E)-geranylgeranyl-L-cysteinyl-[protein] + CoA + H(+). The catalysed reaction is L-lysyl-/S-(2E,6E,10E)-geranylgeranyl-L-cysteinyl-[protein] + dodecanoyl-CoA = N(6)-dodecanoyl-L-lysyl-/S-(2E,6E,10E)-geranylgeranyl-L-cysteinyl-[protein] + CoA + H(+). It carries out the reaction L-lysyl-/S-(2E,6E,10E)-geranylgeranyl-L-cysteinyl-[protein] + decanoyl-CoA = N(6)-decanoyl-L-lysyl-/S-(2E,6E,10E)-geranylgeranyl-L-cysteinyl-[protein] + CoA + H(+). Functionally, precursor of a multifunctional toxin that causes destruction of the actin cytoskeleton by covalent cross-linking of actin and inactivation of Rho GTPases when translocated into the host cytoplasm. Upon translocation into the host cell, undergoes autoprocessing in cis mediated by the peptidase C80 domain (also named CPD domain): the protease activity is activated upon binding inositol hexakisphosphate (InsP6) present at the host cell membrane and delivers the Cysteine protease domain-containing toxin F3 chain to the host cytosol. The Cysteine protease domain-containing toxin F3 chain will then further cleave and release effector toxin chains that cause disassembly of the actin cytoskeleton and enhance V.vulnificus colonization of the small intestine, possibly by facilitating evasion of phagocytic cells. In terms of biological role, following autocatalytic cleavage in cis, this chain mediates processing in trans to release other individual toxin chains to the host cytosol. Released effector toxin chains cause disassembly of the actin cytoskeleton and enhance V.vulnificus colonization of the small intestine, possibly by facilitating evasion of phagocytic cells. Its function is as follows. Actin-directed toxin that catalyzes the covalent cross-linking of host cytoplasmic monomeric actin. Mediates the cross-link between 'Lys-50' of one monomer and 'Glu-270' of another actin monomer, resulting in formation of highly toxic actin oligomers that cause cell rounding. The toxin can be highly efficient at very low concentrations by acting on formin homology family proteins: toxic actin oligomers bind with high affinity to formins and adversely affect both nucleation and elongation abilities of formins, causing their potent inhibition in both profilin-dependent and independent manners. Acts as an acid--amino-acid ligase that transfers the gamma-phosphoryl group of ATP to the 'Glu-270' actin residue, resulting in the formation of an activated acyl phosphate intermediate. This intermediate is further hydrolyzed and the energy of hydrolysis is utilized for the formation of the amide bond between actin subunits. N-epsilon-fatty acyltransferase that mediates lysine-palmitoylation of host Rho GTPase proteins, with a strong preference for host Rac1. After delivery to the host cytosol, localizes to the host cell membrane where it palmitoylates host Rho GTPase proteins, resulting in loss of all active GTP-bound Rho and subsequent actin depolymerization. Prenylation of host Rac1 at the C-terminus is required for lysine-palmitoylation. Functionally, indirectly activates the small GTPase CDC42. This is Multifunctional-autoprocessing repeats-in-toxin from Vibrio vulnificus.